The sequence spans 192 residues: Protein Syd (192 aa).

It belongs to the Syd family.

The protein resides in the cell inner membrane. Interacts with the SecY protein in vivo. May bind preferentially to an uncomplexed state of SecY, thus functioning either as a chelating agent for excess SecY in the cell or as a regulatory factor that negatively controls the translocase function. The chain is Protein Syd from Hahella chejuensis (strain KCTC 2396).